Consider the following 524-residue polypeptide: DEAD-box ATP-dependent RNA helicase CshA (524 aa).

A Q motif motif is present at residues 1–29 (MKFNELNLSADLLAEIEKAGFVEASPIQE). The 171-residue stretch at 32 to 202 (IPLALEGKDV…VQFMKAPEHV (171 aa)) folds into the Helicase ATP-binding domain. Position 45 to 52 (45 to 52 (AQTGTGKT)) interacts with ATP. The short motif at 150-153 (DEAD) is the DEAD box element. In terms of domain architecture, Helicase C-terminal spans 213–373 (LVDQYYIRVK…GLKPASVEES (161 aa)). Residues 440–524 (EKPLPFKPSG…GFVIRNKGDK (85 aa)) are disordered. The segment covering 463 to 498 (RRGDDRRERDRRGNGRRDEFKKGSRGNDRFDKEKRY) has biased composition (basic and acidic residues).

This sequence belongs to the DEAD box helicase family. CshA subfamily. As to quaternary structure, oligomerizes, may be a member of the RNA degradosome.

It is found in the cytoplasm. It catalyses the reaction ATP + H2O = ADP + phosphate + H(+). DEAD-box RNA helicase possibly involved in RNA degradation. Unwinds dsRNA in both 5'- and 3'-directions, has RNA-dependent ATPase activity. In Streptococcus pneumoniae serotype 4 (strain ATCC BAA-334 / TIGR4), this protein is DEAD-box ATP-dependent RNA helicase CshA.